A 264-amino-acid polypeptide reads, in one-letter code: 3-methyl-2-oxobutanoate hydroxymethyltransferase (264 aa).

Mg(2+) contacts are provided by aspartate 45 and aspartate 84. 3-methyl-2-oxobutanoate-binding positions include 45 to 46 (DS), aspartate 84, and lysine 112. Glutamate 114 contributes to the Mg(2+) binding site. Glutamate 181 (proton acceptor) is an active-site residue.

It belongs to the PanB family. As to quaternary structure, homodecamer; pentamer of dimers. The cofactor is Mg(2+).

The protein localises to the cytoplasm. The catalysed reaction is 3-methyl-2-oxobutanoate + (6R)-5,10-methylene-5,6,7,8-tetrahydrofolate + H2O = 2-dehydropantoate + (6S)-5,6,7,8-tetrahydrofolate. Its pathway is cofactor biosynthesis; (R)-pantothenate biosynthesis; (R)-pantoate from 3-methyl-2-oxobutanoate: step 1/2. Catalyzes the reversible reaction in which hydroxymethyl group from 5,10-methylenetetrahydrofolate is transferred onto alpha-ketoisovalerate to form ketopantoate. This Escherichia coli O81 (strain ED1a) protein is 3-methyl-2-oxobutanoate hydroxymethyltransferase.